The chain runs to 298 residues: tRNA-uridine aminocarboxypropyltransferase 2 (298 aa).

An N-acetylmethionine modification is found at Met-1. Residues 1–10 (MEPQAEERTL) are compositionally biased toward basic and acidic residues. The tract at residues 1 to 55 (MEPQAEERTLGEPAPPPSGALASPTPDEEERTEGGAPPTATPAGASGDSTSADGL) is disordered. The segment covering 34-45 (GGAPPTATPAGA) has biased composition (low complexity). Ser-132 bears the Phosphoserine mark. The DXTW signature appears at 178 to 181 (DGTW).

It belongs to the TDD superfamily. DTWD2 family.

The protein localises to the nucleus. It localises to the cytoplasm. It carries out the reaction a uridine in tRNA + S-adenosyl-L-methionine = a 3-[(3S)-3-amino-3-carboxypropyl]uridine in tRNA + S-methyl-5'-thioadenosine + H(+). In terms of biological role, catalyzes the formation of 3-(3-amino-3-carboxypropyl)uridine (acp3U) at position 20a in the D-loop of several cytoplasmic tRNAs (acp3U(20a)). Also has a weak activity to form acp3U at position 20 in the D-loop of tRNAs (acp3U(20)). Involved in glycoRNA biosynthesis by mediating formation of acp3U, which acts as an attachment site for N-glycans on tRNAs. GlycoRNAs consist of RNAs modified with secretory N-glycans that are presented on the cell surface. The sequence is that of tRNA-uridine aminocarboxypropyltransferase 2 from Mus musculus (Mouse).